The sequence spans 198 residues: Glycerol-3-phosphate acyltransferase (198 aa).

Transmembrane regions (helical) follow at residues 2 to 22 (FITY…FALV), 53 to 75 (AGFI…PLIF), 79 to 98 (IHPL…PIFA), 113 to 133 (LLCY…TLLF), and 147 to 167 (IAAV…AMCL).

Belongs to the PlsY family. Probably interacts with PlsX.

It localises to the cell membrane. It catalyses the reaction an acyl phosphate + sn-glycerol 3-phosphate = a 1-acyl-sn-glycero-3-phosphate + phosphate. It functions in the pathway lipid metabolism; phospholipid metabolism. Functionally, catalyzes the transfer of an acyl group from acyl-phosphate (acyl-PO(4)) to glycerol-3-phosphate (G3P) to form lysophosphatidic acid (LPA). This enzyme utilizes acyl-phosphate as fatty acyl donor, but not acyl-CoA or acyl-ACP. In Bacillus cytotoxicus (strain DSM 22905 / CIP 110041 / 391-98 / NVH 391-98), this protein is Glycerol-3-phosphate acyltransferase.